A 433-amino-acid polypeptide reads, in one-letter code: Aspartate--tRNA(Asp/Asn) ligase (433 aa).

Residue Glu167 coordinates L-aspartate. Residues 189–192 (QLFK) are aspartate. Arg211 is an L-aspartate binding site. ATP is bound by residues 211–213 (RAE), 219–221 (RHL), and Glu356. Positions 356 and 359 each coordinate Mg(2+). L-aspartate-binding residues include Ser359 and Arg363. 404–407 (GGER) is a binding site for ATP.

This sequence belongs to the class-II aminoacyl-tRNA synthetase family. Type 2 subfamily. In terms of assembly, homodimer. The cofactor is Mg(2+).

The protein localises to the cytoplasm. It catalyses the reaction tRNA(Asx) + L-aspartate + ATP = L-aspartyl-tRNA(Asx) + AMP + diphosphate. Its function is as follows. Aspartyl-tRNA synthetase with relaxed tRNA specificity since it is able to aspartylate not only its cognate tRNA(Asp) but also tRNA(Asn). Reaction proceeds in two steps: L-aspartate is first activated by ATP to form Asp-AMP and then transferred to the acceptor end of tRNA(Asp/Asn). In Haloferax volcanii (Halobacterium volcanii), this protein is Aspartate--tRNA(Asp/Asn) ligase.